The sequence spans 232 residues: Octanoyltransferase (232 aa).

A BPL/LPL catalytic domain is found at 32-219 (NIIYDTLILL…SFKVFNFSSY (188 aa)). Residues 77-84 (RGGDITYH), 140-142 (AIG), and 153-155 (GFA) contribute to the substrate site. Catalysis depends on Cys171, which acts as the Acyl-thioester intermediate.

This sequence belongs to the LipB family.

Its subcellular location is the cytoplasm. The enzyme catalyses octanoyl-[ACP] + L-lysyl-[protein] = N(6)-octanoyl-L-lysyl-[protein] + holo-[ACP] + H(+). It participates in protein modification; protein lipoylation via endogenous pathway; protein N(6)-(lipoyl)lysine from octanoyl-[acyl-carrier-protein]: step 1/2. In terms of biological role, catalyzes the transfer of endogenously produced octanoic acid from octanoyl-acyl-carrier-protein onto the lipoyl domains of lipoate-dependent enzymes. Lipoyl-ACP can also act as a substrate although octanoyl-ACP is likely to be the physiological substrate. The polypeptide is Octanoyltransferase (Dictyoglomus turgidum (strain DSM 6724 / Z-1310)).